Consider the following 729-residue polypeptide: MSVAYNPQTKQFHLRAGKASYVMQLFRSGYLAHVYWGKAVRDVRGARAFPRLDRAFSPNPDPSDRTFSLDTLLQEYPAYGNTDFRAPAYQVQLENGSTVTDLRYKTHRIYKGKPRLNGLPATYVEHEQEAETLEIVLGDALIGLEVTLQYTAYEKWNVITRSARFENKGGERLKLLRALSMSVDFPTADYDWIHLPGAWGRERWIERRPLVTGVQAAESRRGASSHQQNPFIALVAKNADEHQGEVYGFSFVYSGNFLAQIEVDQFGTARVSMGINPFDFTWLLQPGESFQTPEVVMVYSDQGLNGMSQTYHELYRTRLARGAFRDRERPILINNWEATYFDFNEEKIVNIARTAAELGIELVVLDDGWFGERDDDRRSLGDWIVNRRKLPNGLDGLAKQVNELGLQFGLWVEPEMVSPNSELYRKHPDWCLHVPNRPRSEGRNQLVLDYSREDVCDYIIETISNVLASAPITYVKWDMNRHMTEIGSSALPPERQRETAHRYMLGLYRVMDEITSRFPHILFESCSGGGGRFDPGMLYYMPQTWTSDNTDAVSRLKIQYGTSLVYPISAMGAHVSAVPNHQVGRVASLKTRGHVAMSGNFGYELDITKLTETEKQMMKQQVAFYKDVRRLVQFGTFYRLLSPFEGNEAAWMFVSADRSEALVAYFRVLAEANAPLSYLRLKGLDSNQDYEIEGLGVYGGDELMYAGVALPYRSSDFISMMWRLKAVQQ.

Residues Asp-53, Trp-199, 366-367 (DD), Arg-443, 476-480 (KWDMN), Cys-526, and Asp-548 each bind substrate. The active-site Nucleophile is Asp-478. The Proton donor role is filled by Asp-548.

It belongs to the glycosyl hydrolase 36 family. As to quaternary structure, homotetramer.

It catalyses the reaction Hydrolysis of terminal, non-reducing alpha-D-galactose residues in alpha-D-galactosides, including galactose oligosaccharides, galactomannans and galactolipids.. With respect to regulation, not inhibited by D-galactose or sucrose. Inhibited by pharmaceutical drug 1-deoxygalactonojirimycin. In terms of biological role, hydrolyzes the short-chain alpha-galactosaccharides raffinose and stachyose. The sequence is that of Alpha-galactosidase AgaA from Geobacillus stearothermophilus (Bacillus stearothermophilus).